We begin with the raw amino-acid sequence, 903 residues long: Protein translocase subunit SecA (903 aa).

Residues Gln-89, 107 to 111 (GEGKT), and Asp-502 contribute to the ATP site. Residues Cys-887, Cys-889, Cys-898, and His-899 each coordinate Zn(2+).

The protein belongs to the SecA family. In terms of assembly, monomer and homodimer. Part of the essential Sec protein translocation apparatus which comprises SecA, SecYEG and auxiliary proteins SecDF-YajC and YidC. It depends on Zn(2+) as a cofactor.

It is found in the cell inner membrane. Its subcellular location is the cytoplasm. It carries out the reaction ATP + H2O + cellular proteinSide 1 = ADP + phosphate + cellular proteinSide 2.. Part of the Sec protein translocase complex. Interacts with the SecYEG preprotein conducting channel. Has a central role in coupling the hydrolysis of ATP to the transfer of proteins into and across the cell membrane, serving both as a receptor for the preprotein-SecB complex and as an ATP-driven molecular motor driving the stepwise translocation of polypeptide chains across the membrane. The sequence is that of Protein translocase subunit SecA from Jannaschia sp. (strain CCS1).